Reading from the N-terminus, the 233-residue chain is Germin-like protein (233 aa).

The first 22 residues, 1-22 (MEAYKMFAFVVLLATTLYQAYA), serve as a signal peptide directing secretion. A disulfide bridge connects residues Cys-32 and Cys-49. Residues 63 to 215 (RGLNMPANTD…RPSISMRIWS (153 aa)) form the Cupin type-1 domain. The Mn(2+) site is built by His-111, His-113, Glu-118, and His-162.

Belongs to the germin family. Oligomer (believed to be a pentamer but probably hexamer). Expressed at high levels in unstressed roots.

The protein resides in the secreted. Its subcellular location is the extracellular space. The protein localises to the apoplast. May be involved in seed germination. The sequence is that of Germin-like protein from Mesembryanthemum crystallinum (Common ice plant).